The primary structure comprises 569 residues: Protein THEMIS3 (569 aa).

CABIT regions lie at residues 1–254 (MEQT…ARLD) and 255–523 (RKPR…EERS).

It belongs to the themis family. As to expression, specifically expressed in the intestine.

The sequence is that of Protein THEMIS3 (Themis3) from Mus musculus (Mouse).